We begin with the raw amino-acid sequence, 497 residues long: C4-dicarboxylate transport protein (497 aa).

8 helical membrane-spanning segments follow: residues 27 to 45, 60 to 82, 95 to 117, 168 to 185, 205 to 227, 237 to 259, 348 to 370, and 374 to 393; these read LYVQVLAAIAVGILLGYFY, IMLVKMIIAPVIFLTVATGIAGM, AMIYFLTFSTLALLVGLVVANVV, ILQVLFISVLFGISLAIV, RLVAILMKAAPIGAFGAMAFTIG, LAMLIGTFYLTSFLFVFMVLGAV, ILLLLIAMLSSKGAAGITGAGFI, and ATLSAVPSVPVAGMALILGI. Residues 466 to 497 are disordered; it reads ADRTLAGRPGGRDSRRIAPDHSAQVFGGPLSL. Basic and acidic residues predominate over residues 475–484; that stretch reads GGRDSRRIAP.

Belongs to the dicarboxylate/amino acid:cation symporter (DAACS) (TC 2.A.23) family.

It is found in the cell inner membrane. Functionally, responsible for the transport of dicarboxylates such as succinate, fumarate, and malate from the periplasm across the inner membrane. This transport system plays an essential role in the energy supply of tropical rhizobium-legume symbionts. The polypeptide is C4-dicarboxylate transport protein (dctA1) (Sinorhizobium fredii (strain NBRC 101917 / NGR234)).